Consider the following 154-residue polypeptide: Interleukin-2 (154 aa).

The N-terminal stretch at 1-20 (MYKIQLLSCIALTLILVTNS) is a signal peptide. An intrachain disulfide couples C78 to C126. A glycan (N-linked (GlcNAc...) asparagine) is linked at N111.

Belongs to the IL-2 family.

The protein localises to the secreted. In terms of biological role, cytokine produced by activated CD4-positive helper T-cells and to a lesser extend activated CD8-positive T-cells and natural killer (NK) cells that plays pivotal roles in the immune response and tolerance. Binds to a receptor complex composed of either the high-affinity trimeric IL-2R (IL2RA/CD25, IL2RB/CD122 and IL2RG/CD132) or the low-affinity dimeric IL-2R (IL2RB and IL2RG). Interaction with the receptor leads to oligomerization and conformation changes in the IL-2R subunits resulting in downstream signaling starting with phosphorylation of JAK1 and JAK3. In turn, JAK1 and JAK3 phosphorylate the receptor to form a docking site leading to the phosphorylation of several substrates including STAT5. This process leads to activation of several pathways including STAT, phosphoinositide-3-kinase/PI3K and mitogen-activated protein kinase/MAPK pathways. Functions as a T-cell growth factor and can increase NK-cell cytolytic activity as well. Promotes strong proliferation of activated B-cells and subsequently immunoglobulin production. Plays a pivotal role in regulating the adaptive immune system by controlling the survival and proliferation of regulatory T-cells, which are required for the maintenance of immune tolerance. Moreover, participates in the differentiation and homeostasis of effector T-cell subsets, including Th1, Th2, Th17 as well as memory CD8-positive T-cells. This chain is Interleukin-2 (IL2), found in Felis catus (Cat).